A 455-amino-acid chain; its full sequence is GTPase Der (455 aa).

EngA-type G domains are found at residues 4 to 169 and 178 to 353; these read PVVA…PPKD and IQMA…EQHR. GTP is bound by residues 10–17, 57–61, 120–123, 184–191, 231–235, and 296–299; these read GRPNVGKS, DTGGL, NKCE, DTAGI, and NKWD. Positions 354–439 constitute a KH-like domain; the sequence is RRVSTSVVNE…PLRLFWRGKQ (86 aa).

The protein belongs to the TRAFAC class TrmE-Era-EngA-EngB-Septin-like GTPase superfamily. EngA (Der) GTPase family. As to quaternary structure, associates with the 50S ribosomal subunit.

Functionally, GTPase that plays an essential role in the late steps of ribosome biogenesis. The chain is GTPase Der from Synechococcus sp. (strain CC9605).